Here is a 394-residue protein sequence, read N- to C-terminus: MPPKASKKDAAPAERPILGRFSSHLKIGIVGLPNVGKSTFFNIVTKLSIPAENFPFCTIDPNEARVYVPDERFDWLCQLYKPKSEVSAYLEINDIAGLVRGAHAGEGLGNAFLSHIRAVDGIFHVLRAFEDKEVTHIDDSVDPVRDLETIGEELRLKDIEFVQNKIDDLEKSMKRSNDKQLKLEHELCEKVKAHLEDGKDVRFGDWKSADIEILNTFQLLTAKPVVYLVNMSEKDYQRKKNKFLPKIHAWVQEHGGETIIPFSCAFERLLADMPPDEAAKYCAENQIASVIPKIIKTGFAAIHLIYFFTAGPDEVKCWQIRRQTKAPQAAGTIHTDFERGFICAEVMKFDDLKELGSESAVKAAGKYRQEGKTYVVQDADIIFFKFNVSGGGKK.

In terms of domain architecture, OBG-type G spans 25–282 (LKIGIVGLPN…MPPDEAAKYC (258 aa)). ATP is bound by residues 34-39 (NVGKST), 56-60 (FCTID), and 94-97 (DIAG). Residues serine 38 and threonine 58 each coordinate Mg(2+). GTP is bound at residue phenylalanine 129. ATP-binding positions include 230–231 (NM), methionine 231, and 263–265 (SCA). Residue 263–265 (SCA) participates in GTP binding. The 84-residue stretch at 303–386 (HLIYFFTAGP…QDADIIFFKF (84 aa)) folds into the TGS domain.

This sequence belongs to the TRAFAC class OBG-HflX-like GTPase superfamily. OBG GTPase family. YchF/OLA1 subfamily. As to quaternary structure, monomer (Potential). Interacts with GAP1. Mg(2+) serves as cofactor.

The protein localises to the cytoplasm. It is found in the cell membrane. The protein resides in the cytosol. Activated by GAP1. Its function is as follows. Hydrolyzes ATP, and can also hydrolyze GTP with lower efficiency. Has lower affinity for GTP (Potential). Exhibits GTPase activity. Exhibits similar binding affinities and hydrolytic activities toward both GTP and ATP. Binds to the 26 S ribosomal RNA in vitro, but not to the 5.8 S or 18 S rRNA. Confers sensitivity to salinity stress by suppressing the anti-oxidation enzymatic activities and increasing lipid peroxidation thus leading to the accumulation of reactive oxygen species (ROS). The chain is Obg-like ATPase 1 from Oryza sativa subsp. indica (Rice).